Consider the following 185-residue polypeptide: Protein PBP4 (185 aa).

2 stretches are compositionally biased toward low complexity: residues 1-24 and 46-62; these read MTTT…LSAS and AQAA…QQQQ. 2 disordered regions span residues 1-116 and 147-168; these read MTTT…YNRE and ETAS…SKNK. 3 stretches are compositionally biased toward polar residues: residues 73–83, 91–102, and 147–166; these read PANTKTKTIAS, KGSSTANGSSTN, and ETAS…SSSK.

As to quaternary structure, interacts with IGO1, LSM12 and PBP1.

It localises to the cytoplasm. The protein localises to the nucleus. This Saccharomyces cerevisiae (strain ATCC 204508 / S288c) (Baker's yeast) protein is Protein PBP4 (PBP4).